The following is a 518-amino-acid chain: F-box protein At1g47056 (518 aa).

Residues 37–82 enclose the F-box domain; sequence PDYTSSLPDECLALVFQFLNSGNRKRCALVCRRWMIVEGQNRYRLS.

The protein is F-box protein At1g47056 of Arabidopsis thaliana (Mouse-ear cress).